The sequence spans 408 residues: tRNA-specific 2-thiouridylase MnmA (408 aa).

ATP is bound by residues 27–34 (AMSGGVDS) and Leu-53. The active-site Nucleophile is the Cys-121. A disulfide bond links Cys-121 and Cys-222. Gly-145 is an ATP binding site. The tract at residues 172-174 (RDQ) is interaction with tRNA. Residue Cys-222 is the Cysteine persulfide intermediate of the active site.

This sequence belongs to the MnmA/TRMU family.

Its subcellular location is the cytoplasm. It catalyses the reaction S-sulfanyl-L-cysteinyl-[protein] + uridine(34) in tRNA + AH2 + ATP = 2-thiouridine(34) in tRNA + L-cysteinyl-[protein] + A + AMP + diphosphate + H(+). In terms of biological role, catalyzes the 2-thiolation of uridine at the wobble position (U34) of tRNA, leading to the formation of s(2)U34. The polypeptide is tRNA-specific 2-thiouridylase MnmA (Rhizobium etli (strain CIAT 652)).